The following is an 864-amino-acid chain: Arf-GAP with GTPase, ANK repeat and PH domain-containing protein 1 (864 aa).

The tract at residues 66–276 (SRSVPELKVG…QTSNGGGSLS (211 aa)) is small GTPase-like. The GLD domain occupies 67 to 241 (RSVPELKVGI…TRKKQQLSIG (175 aa)). Residues 78 to 85 (GNLASGKS), 122 to 126 (IRDEG), and 178 to 181 (TQDA) each bind GTP. Disordered regions lie at residues 266-343 (SQTS…IGSG), 405-455 (VPGK…QMAS), and 499-549 (TGLG…LSST). Positions 275–289 (LSDYSSSVPSTPSTS) are enriched in low complexity. Over residues 322–337 (KGSDPDKDKKGLESRA) the composition is skewed to basic and acidic residues. One can recognise a PH domain in the interval 346–591 (IPIKQGMLLK…WVQAIESQIL (246 aa)). The segment covering 413-428 (ATSSCAPVASPKTNGL) has biased composition (polar residues). A compositionally biased stretch (low complexity) spans 507–517 (SSPSISSTTSP). The segment covering 527–537 (ANRKKHRRKKS) has biased composition (basic residues). The segment covering 538–549 (TSNFKVDGLSST) has biased composition (polar residues). Residues 612–732 (ALALQSIRNL…LFLSPLPCRD (121 aa)) form the Arf-GAP domain. A C4-type zinc finger spans residues 627-650 (CVDCDAQSPDWASLNLGALMCIEC). 2 ANK repeats span residues 771 to 800 (DRRT…DVMA) and 804 to 833 (HGNT…PDEQ). Positions 845 to 854 (KNNRNNNSNA) are enriched in low complexity. The interval 845 to 864 (KNNRNNNSNAGGSGLMPTLI) is disordered.

It belongs to the centaurin gamma-like family. As to quaternary structure, homodimer. Interacts with several subunits of the AP-3 protein complex.

It is found in the cytoplasm. In terms of biological role, GTPase-activating protein. Directly and specifically regulates the adapter protein 3 (AP-3)-dependent trafficking of proteins in the endosomal-lysosomal system. The polypeptide is Arf-GAP with GTPase, ANK repeat and PH domain-containing protein 1 (agap1) (Xenopus laevis (African clawed frog)).